The primary structure comprises 65 residues: Hirudin-2' (65 aa).

The segment at 1 to 3 (ITY) is interaction with thrombin active site. 3 cysteine pairs are disulfide-bonded: Cys6/Cys14, Cys16/Cys28, and Cys22/Cys39. The segment at 39 to 65 (CVTGEGTPKPQSHNDGDFEEIPEEYLQ) is disordered. A glycan (O-linked (GalNAc...) threonine) is linked at Thr45. The interaction with fibrinogen-binding exosite of thrombin stretch occupies residues 55 to 65 (DFEEIPEEYLQ). Residues 55-65 (DFEEIPEEYLQ) are compositionally biased toward acidic residues. Position 63 is a sulfotyrosine (Tyr63).

This sequence belongs to the protease inhibitor I14 (hirudin) family.

It is found in the secreted. Its function is as follows. Hirudin is a potent thrombin-specific protease inhibitor. It forms a stable non-covalent complex with alpha-thrombin, thereby abolishing its ability to cleave fibrinogen. The protein is Hirudin-2' of Hirudo medicinalis (Medicinal leech).